We begin with the raw amino-acid sequence, 402 residues long: Acyl-[acyl-carrier-protein] desaturase 3, chloroplastic (402 aa).

Disordered stretches follow at residues 1-25 (MSLT…GGAS) and 38-66 (VGGI…THTL). The N-terminal 32 residues, 1 to 32 (MSLTGCLPPRPPCSMRRRTSGGGASVSPVVVM), are a transit peptide targeting the chloroplast. E139, E178, H181, E231, E264, and H267 together coordinate Fe cation.

The protein belongs to the fatty acid desaturase type 2 family. In terms of assembly, homodimer. It depends on Fe(2+) as a cofactor.

The protein localises to the plastid. It is found in the chloroplast. It functions in the pathway lipid metabolism; fatty acid metabolism. Its function is as follows. Introduces a cis double bond in the acyl chain of an acyl-[acyl-carrier protein]. The polypeptide is Acyl-[acyl-carrier-protein] desaturase 3, chloroplastic (Oryza sativa subsp. indica (Rice)).